We begin with the raw amino-acid sequence, 577 residues long: Vacuolar membrane amino acid uptake transporter fnx2 (577 aa).

Over residues 1 to 14 (MSNPRTKSPNTNRG) the composition is skewed to polar residues. The interval 1-80 (MSNPRTKSPN…SPHRQDAATT (80 aa)) is disordered. Over residues 22 to 39 (SALLNDSLSSLNGNSSYD) the composition is skewed to low complexity. Over residues 40-62 (SIKDSSKNNKDVAEVNEYPRRPE) the composition is skewed to basic and acidic residues. Transmembrane regions (helical) follow at residues 91-111 (VLPALLLGVVLAALDNTIVAS), 123-145 (FSQVSWTATAYMISCTAFQPLFG), 157-177 (LLAAYCVFGIGCFLCGTSRSL), 186-206 (IAGIGGGGMNSTVSILMSDIV), 217-237 (IINVFFAIGSSLGGPVGGYFA), 244-264 (IGFLIQVPLIAIAFLCVYFTL), 286-306 (LILLIIGVTTMTCAFTLGGNV), 317-337 (LLIASSISYLSFVYVEAFVAF), 356-376 (LCNFFHSVANFGWIYGMPLFF), 391-411 (LIPMIIGSSLGSLLGGAVISL), 418-438 (ITVGSYFFGSVAALFMLRYGY), 448-468 (YPFSGGLGNGIAVTTTLVAII), 490-510 (GCVLGVSISSSIVQTVLGIKL), and 547-567 (LLGSIHYSFLFVSFMFFCAFV).

The protein belongs to the major facilitator superfamily.

It localises to the vacuole. It is found in the membrane. Its function is as follows. MFS-type transporter involved in vacuolar amino acid uptake. The protein is Vacuolar membrane amino acid uptake transporter fnx2 (fnx2) of Schizosaccharomyces pombe (strain 972 / ATCC 24843) (Fission yeast).